Here is a 312-residue protein sequence, read N- to C-terminus: Glyoxylate/hydroxypyruvate reductase A (312 aa).

Arg-227 is a catalytic residue. His-275 acts as the Proton donor in catalysis.

Belongs to the D-isomer specific 2-hydroxyacid dehydrogenase family. GhrA subfamily.

It localises to the cytoplasm. The enzyme catalyses glycolate + NADP(+) = glyoxylate + NADPH + H(+). It carries out the reaction (R)-glycerate + NAD(+) = 3-hydroxypyruvate + NADH + H(+). It catalyses the reaction (R)-glycerate + NADP(+) = 3-hydroxypyruvate + NADPH + H(+). Its function is as follows. Catalyzes the NADPH-dependent reduction of glyoxylate and hydroxypyruvate into glycolate and glycerate, respectively. The chain is Glyoxylate/hydroxypyruvate reductase A from Escherichia coli O6:K15:H31 (strain 536 / UPEC).